The primary structure comprises 446 residues: N-succinylarginine dihydrolase (446 aa).

Residues 19–28 (AGLSYGNVAS), N110, and 137–138 (HR) each bind substrate. The active site involves E174. R214 lines the substrate pocket. Residue H250 is part of the active site. 2 residues coordinate substrate: D252 and N363. C369 serves as the catalytic Nucleophile.

The protein belongs to the succinylarginine dihydrolase family. In terms of assembly, homodimer.

It carries out the reaction N(2)-succinyl-L-arginine + 2 H2O + 2 H(+) = N(2)-succinyl-L-ornithine + 2 NH4(+) + CO2. The protein operates within amino-acid degradation; L-arginine degradation via AST pathway; L-glutamate and succinate from L-arginine: step 2/5. In terms of biological role, catalyzes the hydrolysis of N(2)-succinylarginine into N(2)-succinylornithine, ammonia and CO(2). The polypeptide is N-succinylarginine dihydrolase (Pseudoalteromonas atlantica (strain T6c / ATCC BAA-1087)).